A 295-amino-acid chain; its full sequence is Ankyrin repeat and SOCS box protein 17 (295 aa).

The ANK repeat unit spans residues 146–176 (SGITPLLYVAQTRQSNILKILLQYGILEREK). The SOCS box domain occupies 243 to 295 (DYIPPTRYKDPCELVHLCRITIRTQLLANNMLPNGIFSLLIPTRLQNFLNLES).

This sequence belongs to the ankyrin SOCS box (ASB) family. In terms of tissue distribution, specifically expressed in testis. Localizes to spermatogenic cells in testis, with highest expression in round spermatids and condensing spermatids and lower expression in pachytene spermatocytes.

It participates in protein modification; protein ubiquitination. In terms of biological role, may be a substrate-recognition component of a SCF-like ECS (Elongin-Cullin-SOCS-box protein) E3 ubiquitin-protein ligase complex which mediates the ubiquitination and subsequent proteasomal degradation of target proteins. The chain is Ankyrin repeat and SOCS box protein 17 (Asb17) from Mus musculus (Mouse).